The primary structure comprises 482 residues: ATP synthase subunit beta (482 aa).

168–175 (GGAGVGKT) contributes to the ATP binding site.

The protein belongs to the ATPase alpha/beta chains family. F-type ATPases have 2 components, CF(1) - the catalytic core - and CF(0) - the membrane proton channel. CF(1) has five subunits: alpha(3), beta(3), gamma(1), delta(1), epsilon(1). CF(0) has three main subunits: a(1), b(2) and c(9-12). The alpha and beta chains form an alternating ring which encloses part of the gamma chain. CF(1) is attached to CF(0) by a central stalk formed by the gamma and epsilon chains, while a peripheral stalk is formed by the delta and b chains.

Its subcellular location is the cell membrane. It carries out the reaction ATP + H2O + 4 H(+)(in) = ADP + phosphate + 5 H(+)(out). Functionally, produces ATP from ADP in the presence of a proton gradient across the membrane. The catalytic sites are hosted primarily by the beta subunits. In Corynebacterium urealyticum (strain ATCC 43042 / DSM 7109), this protein is ATP synthase subunit beta.